Here is a 1548-residue protein sequence, read N- to C-terminus: UDP-glucose:glycoprotein glucosyltransferase (1548 aa).

The signal sequence occupies residues 1–22 (MLRAVALCVSVVLIALYTPTSG). Asn-181 carries an N-linked (GlcNAc...) asparagine glycan. Positions 243-253 (TEYKSQDDAPK) are enriched in basic and acidic residues. The interval 243–265 (TEYKSQDDAPKPEAGSTSDEDLA) is disordered. N-linked (GlcNAc...) asparagine glycans are attached at residues Asn-266 and Asn-864. Residues 1227–1548 (SANQAATDED…PSHEPKHGEL (322 aa)) form a glucosyltransferase region. Basic and acidic residues predominate over residues 1512-1523 (EDHENSHSRDSA). The interval 1512-1548 (EDHENSHSRDSAVDDSVDDSVEVTTVTPSHEPKHGEL) is disordered. Positions 1545-1548 (HGEL) match the Prevents secretion from ER motif.

The protein belongs to the glycosyltransferase 8 family. In terms of assembly, monomer. May interact with CG7484/Sep15. It depends on Ca(2+) as a cofactor. Requires Mn(2+) as cofactor.

It localises to the endoplasmic reticulum lumen. The protein resides in the endoplasmic reticulum-Golgi intermediate compartment. It catalyses the reaction N(4)-(alpha-D-Man-(1-&gt;2)-alpha-D-Man-(1-&gt;2)-alpha-D-Man-(1-&gt;3)-[alpha-D-Man-(1-&gt;2)-alpha-D-Man-(1-&gt;3)-[alpha-D-Man-(1-&gt;2)-alpha-D-Man-(1-&gt;6)]-alpha-D-Man-(1-&gt;6)]-beta-D-Man-(1-&gt;4)-beta-D-GlcNAc-(1-&gt;4)-beta-D-GlcNAc)-L-asparaginyl-[protein] (N-glucan mannose isomer 9A1,2,3B1,2,3) + UDP-alpha-D-glucose = N(4)-(alpha-D-Glc-(1-&gt;3)-alpha-D-Man-(1-&gt;2)-alpha-D-Man-(1-&gt;2)-alpha-D-Man-(1-&gt;3)-[alpha-D-Man-(1-&gt;2)-alpha-D-Man-(1-&gt;3)-[alpha-D-Man-(1-&gt;2)-alpha-D-Man-(1-&gt;6)]-alpha-D-Man-(1-&gt;6)]-beta-D-Man-(1-&gt;4)-beta-D-GlcNAc-(1-&gt;4)-beta-D-GlcNAc)-L-asparaginyl-[protein] + UDP + H(+). The protein operates within protein modification; protein glycosylation. Its function is as follows. Recognizes glycoproteins with minor folding defects. Reglucosylates single N-glycans near the misfolded part of the protein, thus providing quality control for protein folding in the endoplasmic reticulum. Reglucosylated proteins are recognized by calreticulin for recycling to the endoplasmic reticulum and refolding or degradation. The protein is UDP-glucose:glycoprotein glucosyltransferase of Drosophila melanogaster (Fruit fly).